The primary structure comprises 376 residues: Thymidine kinase (376 aa).

The segment at 1 to 39 is disordered; the sequence is MASYPCHQHASAFDQAARSRGHSNRRTALRPRRQQEATE. The span at 19 to 32 shows a compositional bias: basic residues; the sequence is SRGHSNRRTALRPR. An ATP-binding site is contributed by 56–63; it reads GPHGMGKT. E83 serves as the catalytic Proton acceptor. 2 residues coordinate substrate: Y101 and Q125. R216 serves as a coordination point for ATP. Residue R222 participates in substrate binding.

The protein belongs to the herpesviridae thymidine kinase family. As to quaternary structure, homodimer.

It catalyses the reaction thymidine + ATP = dTMP + ADP + H(+). Its function is as follows. Catalyzes the transfer of the gamma-phospho group of ATP to thymidine to generate dTMP in the salvage pathway of pyrimidine synthesis. The dTMP serves as a substrate for DNA polymerase during viral DNA replication. Allows the virus to be reactivated and to grow in non-proliferative cells lacking a high concentration of phosphorylated nucleic acid precursors. The polypeptide is Thymidine kinase (Human herpesvirus 1 (strain CL101) (HHV-1)).